A 345-amino-acid chain; its full sequence is Cytoskeleton protein RodZ (345 aa).

At 1–111 (MNTEASQDQT…LGKKHKKRDG (111 aa)) the chain is on the cytoplasmic side. The 61-residue stretch at 19 to 79 (LRQARESLGL…KLVHLPEDEL (61 aa)) folds into the HTH cro/C1-type domain. The H-T-H motif DNA-binding region spans 30–49 (QQTVAERLCLKVSTIRDIEE). The helical; Signal-anchor for type II membrane protein transmembrane segment at 112–132 (WLMSFTWLIVLVVLGLTGAWW) threads the bilayer. Over 133–345 (WQNHQAQQAE…RVARLTVGVE (213 aa)) the chain is Periplasmic. The interval 151–260 (SAQLSQNGGQ…LPTADAGVSG (110 aa)) is disordered. Residues 188 to 225 (PLTNHSGSAITNSATTSSVPKTTSTEPVDTANTNTTMH) are compositionally biased toward polar residues. Low complexity predominate over residues 229–241 (AASAAVSPSQVPQ).

Belongs to the RodZ family.

The protein resides in the cell inner membrane. Its function is as follows. Cytoskeletal protein that is involved in cell-shape control through regulation of the length of the long axis. The chain is Cytoskeleton protein RodZ from Yersinia pestis (strain Pestoides F).